A 155-amino-acid chain; its full sequence is S-ribosylhomocysteine lyase (155 aa).

His-58, His-62, and Cys-125 together coordinate Fe cation.

This sequence belongs to the LuxS family. As to quaternary structure, homodimer. Fe cation is required as a cofactor.

It catalyses the reaction S-(5-deoxy-D-ribos-5-yl)-L-homocysteine = (S)-4,5-dihydroxypentane-2,3-dione + L-homocysteine. Involved in the synthesis of autoinducer 2 (AI-2) which is secreted by bacteria and is used to communicate both the cell density and the metabolic potential of the environment. The regulation of gene expression in response to changes in cell density is called quorum sensing. Catalyzes the transformation of S-ribosylhomocysteine (RHC) to homocysteine (HC) and 4,5-dihydroxy-2,3-pentadione (DPD). In Helicobacter pylori (strain P12), this protein is S-ribosylhomocysteine lyase.